Here is a 38-residue protein sequence, read N- to C-terminus: Large ribosomal subunit protein bL36 (38 aa).

This sequence belongs to the bacterial ribosomal protein bL36 family.

The protein is Large ribosomal subunit protein bL36 of Fervidobacterium nodosum (strain ATCC 35602 / DSM 5306 / Rt17-B1).